We begin with the raw amino-acid sequence, 137 residues long: Small ribosomal subunit protein uS12 (137 aa).

Asp-102 carries the 3-methylthioaspartic acid modification.

This sequence belongs to the universal ribosomal protein uS12 family. In terms of assembly, part of the 30S ribosomal subunit. Contacts proteins S8 and S17. May interact with IF1 in the 30S initiation complex.

Its function is as follows. With S4 and S5 plays an important role in translational accuracy. Interacts with and stabilizes bases of the 16S rRNA that are involved in tRNA selection in the A site and with the mRNA backbone. Located at the interface of the 30S and 50S subunits, it traverses the body of the 30S subunit contacting proteins on the other side and probably holding the rRNA structure together. The combined cluster of proteins S8, S12 and S17 appears to hold together the shoulder and platform of the 30S subunit. The polypeptide is Small ribosomal subunit protein uS12 (Mesoplasma florum (strain ATCC 33453 / NBRC 100688 / NCTC 11704 / L1) (Acholeplasma florum)).